A 160-amino-acid polypeptide reads, in one-letter code: uncharacterized protein (160 aa).

Positions M1 to D31 are enriched in basic and acidic residues. The segment at M1–E160 is disordered. A coiled-coil region spans residues K20–K111. Residues K32 to K42 are compositionally biased toward basic residues. Residues D43–E160 are compositionally biased toward basic and acidic residues.

This is an uncharacterized protein from Dictyostelium discoideum (Social amoeba).